The primary structure comprises 84 residues: Toxin NvePTx1 (84 aa).

The N-terminal stretch at 1–21 is a signal peptide; the sequence is MFSARLVLVFAVVLCIQLCNA. Positions 22–34 are excised as a propeptide; the sequence is SWLDERAMTQEKR.

The protein belongs to the sea anemone type 5 potassium channel toxin family. Contains 4 disulfide bonds. In unfertilized eggs and early post-fertilization stages, is expressed uniformly. In gastrulae, the expression becomes spatially-localized and seems to be absent from the oral and aboral poles. In planulae, the expression is clearly observed in the ectoderm in packed gland cells absent from the two body poles, and upon metamorphosis, the expression diminishes. There is two types of gland cells, one large and elongated and another small and round. This toxin is maternally deposited at both protein and RNA levels.

The protein localises to the secreted. It is found in the nematocyst. In terms of biological role, neurotoxin that is probably only defensive. Acts as a voltage-gated potassium channel (Kv) inhibitor. In vivo, induces a rapid increase in swimming speed on zebrafish larvae, as well as death which occurs between 2 and 18 hours later. The polypeptide is Toxin NvePTx1 (Nematostella vectensis (Starlet sea anemone)).